The primary structure comprises 362 residues: HLA class I histocompatibility antigen, B alpha chain (362 aa).

Residues 1–24 form the signal peptide; the sequence is MLVMAPRTVLLLLSAALALTETWA. The VL9 epitope stretch occupies residues 3-11; it reads VMAPRTVLL. The segment at 25 to 114 is alpha-1; the sequence is GSHSMRYFYT…LRGYYNQSEA (90 aa). The Extracellular portion of the chain corresponds to 25-309; it reads GSHSMRYFYT…PSSQSTVPIV (285 aa). Position 87 (Asn87) interacts with a peptide antigen. The Bw6 motif motif lies at 101-107; it reads SLRNLRG. Tyr108 contributes to the a peptide antigen binding site. Asn110 carries an N-linked (GlcNAc...) asparagine glycan. Residues 115–206 form an alpha-2 region; it reads GSHTLQSMYG…ENGKDKLERA (92 aa). The cysteines at positions 125 and 188 are disulfide-linked. A peptide antigen is bound by residues Thr167, Lys170, Glu176, Tyr183, and Tyr195. Positions 207-298 are alpha-3; it reads DPPKTHVTHH…GLPKPLTLRW (92 aa). The Ig-like C1-type domain occupies 209 to 295; it reads PKTHVTHHPI…QHEGLPKPLT (87 aa). Cys227 and Cys283 are oxidised to a cystine. A connecting peptide region spans residues 299-309; the sequence is EPSSQSTVPIV. Residues 310 to 333 traverse the membrane as a helical segment; sequence GIVAGLAVLAVVVIGAVVAAVMCR. Topologically, residues 334–362 are cytoplasmic; that stretch reads RKSSGGKGGSYSQAACSDSAQGSDVSLTA. Residues 337–362 form a disordered region; the sequence is SGGKGGSYSQAACSDSAQGSDVSLTA. Residues 346 to 362 are compositionally biased toward polar residues; sequence QAACSDSAQGSDVSLTA.

In terms of assembly, heterotrimer that consists of an alpha chain HLA-B, a beta chain B2M and a peptide (peptide-HLA-B-B2M). Early in biogenesis, HLA-B-B2M dimer interacts with the components of the peptide-loading complex composed of TAPBP, TAP1-TAP2, TAPBPL, PDIA3/ERP57 and CALR. Interacts with TAP1-TAP2 transporter via TAPBP; this interaction is obligatory for the loading of peptide epitopes delivered to the ER by TAP1-TAP2 transporter. Interacts with TAPBPL; TAPBPL binds peptide-free HLA-B-B2M complexes or those loaded with low affinity peptides, likely facilitating peptide exchange for higher affinity peptides. Only optimally assembled peptide-HLA-B-B2M trimer translocates to the surface of antigen-presenting cells, where it interacts with TCR and CD8 coreceptor on the surface of T cells. HLA-B (via polymorphic alpha-1 and alpha-2 domains) interacts with antigen-specific TCR (via CDR1, CDR2 and CDR3 domains). One HLA-B molecule (mainly via nonpolymorphic alpha-3 domain) interacts with one CD8A homodimer (via CDR-like loop); this interaction ensures peptide-HLA-B-B2M recognition by CD8-positive T cells only. Allele B*57:01 interacts (via Bw4 motif) with KIR3DL1 (via Ig-like C2-type domain); this interaction may interfere with peptide binding. Allele B*46:01 interacts with KIR2DL3. As to quaternary structure, (Microbial infection) Interacts with HTLV-1 accessory protein p12I.

It is found in the cell membrane. The protein resides in the endoplasmic reticulum membrane. Antigen-presenting major histocompatibility complex class I (MHCI) molecule. In complex with B2M/beta 2 microglobulin displays primarily viral and tumor-derived peptides on antigen-presenting cells for recognition by alpha-beta T cell receptor (TCR) on HLA-B-restricted CD8-positive T cells, guiding antigen-specific T cell immune response to eliminate infected or transformed cells. May also present self-peptides derived from the signal sequence of secreted or membrane proteins, although T cells specific for these peptides are usually inactivated to prevent autoreactivity. Both the peptide and the MHC molecule are recognized by TCR, the peptide is responsible for the fine specificity of antigen recognition and MHC residues account for the MHC restriction of T cells. Typically presents intracellular peptide antigens of 8 to 13 amino acids that arise from cytosolic proteolysis via constitutive proteasome and IFNG-induced immunoproteasome. Can bind different peptides containing allele-specific binding motifs, which are mainly defined by anchor residues at position 2 and 9. In terms of biological role, allele B*07:02: Displays peptides sharing a common signature motif, namely a Pro residue at position 2 and mainly a Leu anchor residue at the C-terminus. Presents a long peptide (APRGPHGGAASGL) derived from the cancer-testis antigen CTAG1A/NY-ESO-1, eliciting a polyclonal CD8-positive T cell response against tumor cells. Presents viral epitopes derived from HIV-1 gag-pol (TPQDLNTML) and Nef (RPQVPLRPM). Presents an immunodominant epitope derived from SARS-CoV-2 N/nucleoprotein (SPRWYFYYL). Displays self-peptides including a peptide derived from the signal sequence of HLA-DPB1 (APRTVALTA). Its function is as follows. Allele B*08:01: Presents to CD8-positive T cells viral epitopes derived from EBV/HHV-4 EBNA3 (QAKWRLQTL), eliciting cytotoxic T cell response. Functionally, allele B*13:02: Presents multiple HIV-1 epitopes derived from gag (RQANFLGKI, GQMREPRGSDI), nef (RQDILDLWI), gag-pol (RQYDQILIE, GQGQWTYQI) and rev (LQLPPLERL), all having in common a Gln residue at position 2 and mainly hydrophobic amino acids Leu, Ile or Val at the C-terminus. Associated with successful control of HIV-1 infection. Allele B*18:01: Preferentially presents octomeric and nonameric peptides sharing a common motif, namely a Glu at position 2 and Phe or Tyr anchor residues at the C-terminus. Presents an EBV/HHV-4 epitope derived from BZLF1 (SELEIKRY). May present to CD8-positive T cells an antigenic peptide derived from MAGEA3 (MEVDPIGHLY), triggering an anti-tumor immune response. May display a broad repertoire of self-peptides with a preference for peptides derived from RNA-binding proteins. In terms of biological role, allele B*27:05: Presents to CD8-positive T cells immunodominant viral epitopes derived from HCV POLG (ARMILMTHF), HIV-1 gag (KRWIILGLNK), IAV NP (SRYWAIRTR), SARS-CoV-2 N/nucleoprotein (QRNAPRITF), EBV/HHV-4 EBNA4 (HRCQAIRKK) and EBV/HHV-4 EBNA6 (RRIYDLIEL), conferring longterm protection against viral infection. Can present self-peptides derived from cytosolic and nuclear proteins. All peptides carry an Arg at position 2. The peptide-bound form interacts with NK cell inhibitory receptor KIR3DL1 and inhibits NK cell activation in a peptide-specific way, being particularly sensitive to the nature of the amino acid side chain at position 8 of the antigenic peptide. KIR3DL1 fails to recognize HLA-B*27:05 in complex with B2M and EBV/HHV-4 EBNA6 (RRIYDLIEL) peptide, which can lead to increased activation of NK cells during infection. May present an altered repertoire of peptides in the absence of TAP1-TAP2 and TAPBPL. Its function is as follows. Allele B*40:01: Presents immunodominant viral epitopes derived from EBV/HHV-4 LMP2 (IEDPPFNSL) and SARS-CoV-2 N/nucleoprotein (MEVTPSGTWL), triggering memory CD8-positive T cell response. Displays self-peptides sharing a signature motif, namely a Glu at position 2 and a Leu anchor residue at the C-terminus. Functionally, allele B*41:01: Displays self-peptides sharing a signature motif, namely a Glu at position 2 and Ala or Pro anchor residues at the C-terminus. Allele B*44:02: Presents immunodominant viral epitopes derived from EBV/HHV-4 EBNA4 (VEITPYKPTW) and EBNA6 (AEGGVGWRHW, EENLLDFVRF), triggering memory CD8-positive T cell response. Displays self-peptides sharing a signature motif, namely a Glu at position 2 and Phe, Tyr or Trp anchor residues at the C-terminus. In terms of biological role, allele B*45:01: Displays self-peptides sharing a signature motif, namely a Glu at position 2 and Ala or Pro anchor residues at the C-terminus. Its function is as follows. Allele B*46:01: Preferentially presents nonameric peptides sharing a signature motif, namely Ala and Leu at position 2 and Tyr, Phe, Leu, or Met anchor residues at the C-terminus. The peptide-bound form interacts with KIR2DL3 and inhibits NK cell cytotoxic response in a peptide-specific way. Functionally, allele B*47:01: Displays self-peptides sharing a signature motif, namely an Asp at position 2 and Leu or Met anchor residues at the C-terminus. Allele B*49:01: Displays self-peptides sharing a signature motif, namely a Glu at position 2 and Ile or Val anchor residues at the C-terminus. In terms of biological role, allele B*50:01: Displays self-peptides sharing a signature motif, namely a Glu at position 2 and Ala or Pro anchor residues at the C-terminus. Its function is as follows. Allele B*51:01: Presents an octomeric HIV-1 epitope derived from gag-pol (TAFTIPSI) to the public TRAV17/TRBV7-3 TCR clonotype, strongly suppressing HIV-1 replication. Functionally, allele B*54:01: Displays peptides sharing a common signature motif, namely a Pro residue at position 2 and Ala anchor residue at the C-terminus. Allele B*55:01: Displays peptides sharing a common signature motif, namely a Pro residue at position 2 and Ala anchor residue at the C-terminus. In terms of biological role, allele B*56:01: Displays peptides sharing a common signature motif, namely a Pro residue at position 2 and Ala anchor residue at the C-terminus. Its function is as follows. Allele B*57:01: The peptide-bound form recognizes KIR3DL1 and inhibits NK cell cytotoxic response. Presents HIV gag peptides (immunodominant KAFSPEVIPMF and subdominant KALGPAATL epitopes) predominantly to CD8-positive T cell clones expressing a TRAV41-containing TCR, triggering HLA-B-restricted T cell responses. Functionally, allele B*67:01: Displays peptides sharing a common signature motif, namely a Pro residue at position 2 and Leu anchor residue at the C-terminus. This Homo sapiens (Human) protein is HLA class I histocompatibility antigen, B alpha chain.